The sequence spans 327 residues: Cell division protein ZipA (327 aa).

Topologically, residues 1–5 are periplasmic; it reads MQDLR. The chain crosses the membrane as a helical span at residues 6 to 26; the sequence is LILIVVGAIAIIALLLHGLWT. The Cytoplasmic portion of the chain corresponds to 27–327; that stretch reads SRKERSSLFR…REVLDANTIA (301 aa). The span at 60–71 shows a compositional bias: basic and acidic residues; the sequence is GEVRVRTSHPQE. Positions 60–182 are disordered; the sequence is GEVRVRTSHP…EPVAPAPEAK (123 aa). Polar residues-rich tracts occupy residues 94–103 and 163–173; these read KSAQVKTASR and APQQHVESQQE.

The protein belongs to the ZipA family. In terms of assembly, interacts with FtsZ via their C-terminal domains.

The protein localises to the cell inner membrane. In terms of biological role, essential cell division protein that stabilizes the FtsZ protofilaments by cross-linking them and that serves as a cytoplasmic membrane anchor for the Z ring. Also required for the recruitment to the septal ring of downstream cell division proteins. This is Cell division protein ZipA from Yersinia pseudotuberculosis serotype O:1b (strain IP 31758).